A 65-amino-acid polypeptide reads, in one-letter code: Large ribosomal subunit protein bL35 (65 aa).

2 disordered regions span residues 1–23 (MPKIKTNRAAAKRFKKTGSGKVK) and 29–48 (GSHILAKKSRKRKRDLRQSH). Residues 33–43 (LAKKSRKRKRD) show a composition bias toward basic residues.

It belongs to the bacterial ribosomal protein bL35 family.

The chain is Large ribosomal subunit protein bL35 from Desulfatibacillum aliphaticivorans.